Reading from the N-terminus, the 169-residue chain is Protein-export protein SecB (169 aa).

Belongs to the SecB family. As to quaternary structure, homotetramer, a dimer of dimers. One homotetramer interacts with 1 SecA dimer.

It is found in the cytoplasm. Its function is as follows. One of the proteins required for the normal export of preproteins out of the cell cytoplasm. It is a molecular chaperone that binds to a subset of precursor proteins, maintaining them in a translocation-competent state. It also specifically binds to its receptor SecA. The polypeptide is Protein-export protein SecB (Haemophilus influenzae (strain PittEE)).